Reading from the N-terminus, the 111-residue chain is COX assembly mitochondrial protein (111 aa).

Residues 39–82 form the CHCH domain; the sequence is YKKCANFVQAMADCAKANGMKVFPTCDKQRDEMKSCLLFYQTDE. 2 short sequence motifs (cx9C motif) span residues 42–52 and 64–74; these read CANFVQAMADC and CDKQRDEMKSC. 2 disulfide bridges follow: Cys42–Cys74 and Cys52–Cys64.

It belongs to the CMC family.

The protein localises to the mitochondrion inner membrane. Functionally, required for mitochondrial cytochrome c oxidase (COX) assembly and respiration. Binds copper. May be involved in copper trafficking and distribution to mitochondrial COX and SOD1. The sequence is that of COX assembly mitochondrial protein (CMC1) from Saccharomyces cerevisiae (strain YJM789) (Baker's yeast).